We begin with the raw amino-acid sequence, 392 residues long: NADH-quinone oxidoreductase subunit D (392 aa).

It belongs to the complex I 49 kDa subunit family. As to quaternary structure, NDH-1 is composed of 14 different subunits. Subunits NuoB, C, D, E, F, and G constitute the peripheral sector of the complex.

Its subcellular location is the cell inner membrane. The catalysed reaction is a quinone + NADH + 5 H(+)(in) = a quinol + NAD(+) + 4 H(+)(out). NDH-1 shuttles electrons from NADH, via FMN and iron-sulfur (Fe-S) centers, to quinones in the respiratory chain. The immediate electron acceptor for the enzyme in this species is believed to be ubiquinone. Couples the redox reaction to proton translocation (for every two electrons transferred, four hydrogen ions are translocated across the cytoplasmic membrane), and thus conserves the redox energy in a proton gradient. This chain is NADH-quinone oxidoreductase subunit D, found in Paramagnetospirillum magneticum (strain ATCC 700264 / AMB-1) (Magnetospirillum magneticum).